The chain runs to 687 residues: Follicle-stimulating hormone receptor (687 aa).

A signal peptide spans 1 to 17; it reads MALLLVSLLAFLSLGSG. Residues 18–46 form the LRRNT domain; that stretch reads CHHQVCHYSNRVFLCQESKVTEIPSDLPR. Residues 18-358 are Extracellular-facing; that stretch reads CHHQVCHYSN…EDIMGYDILR (341 aa). Cys23 and Cys32 are joined by a disulfide. 9 LRR repeats span residues 49-72, 73-97, 98-118, 119-143, 144-169, 170-192, 193-216, 217-240, and 241-259; these read LELRFVLTKLRVIPKGAFSGFGDL, KKIEISQNDVLEVIEANVFSNLPKL, HEIRIEKANNLLYIDHDAFQN, LPNLQYLLISNTGIKHLPAVHKIQS, LQKVLLDIQDNINIHIVERNSFMGLS, FESMILRLSKNGIQEIHNCAFNG, TQLDELNLSDNNNLEELPNDVFQG, ASGPVILDISGTRIHSLPNYGLEN, and LKKLRARSTYNLKKLPSLE. Asn191 and Asn199 each carry an N-linked (GlcNAc...) asparagine glycan. 4 disulfide bridges follow: Cys275–Cys338, Cys276–Cys292, Cys276–Cys348, and Cys292–Cys330. N-linked (GlcNAc...) asparagine glycosylation is present at Asn293. Tyr327 carries the sulfotyrosine modification. The helical transmembrane segment at 359–379 threads the bilayer; sequence VLIWFISILAITGNIIVLVIL. At 380–390 the chain is on the cytoplasmic side; that stretch reads ITSQYKLTVPR. The chain crosses the membrane as a helical span at residues 391-413; it reads FLMCNLAFADLCIGIYLLLIASV. The Extracellular portion of the chain corresponds to 414 to 435; the sequence is DIHTKSQYHNYAIDWQTGAGCD. A disulfide bond links Cys434 and Cys509. A helical membrane pass occupies residues 436–457; it reads AAGFFTVFGSELSVYTLTAITL. Topologically, residues 458–477 are cytoplasmic; it reads ERWHTITHAMQLECKVQLRH. The helical transmembrane segment at 478 to 500 threads the bilayer; the sequence is AASVMLVGWIFGFGVGLLPIFGI. The Extracellular segment spans residues 501–520; sequence STYMKVSICLPMDIDSPLSQ. The helical transmembrane segment at 521–542 threads the bilayer; it reads LYVMSLLVLNVLAFVVICGCYT. The Cytoplasmic segment spans residues 543-565; the sequence is HIYLTVRNPNIVSSSSDTKIAKR. The helical transmembrane segment at 566-589 threads the bilayer; the sequence is MGILIFTDFLCMAPISFFGISASL. The Extracellular segment spans residues 590–600; that stretch reads KVALITVSKSK. The helical transmembrane segment at 601-622 threads the bilayer; that stretch reads ILLVLFYPINSCANPFLYAIFT. The Cytoplasmic segment spans residues 623–687; that stretch reads KNFRRDFFIL…LVPLSHLAQN (65 aa).

Belongs to the G-protein coupled receptor 1 family. FSH/LSH/TSH subfamily. Homotrimer. Functions as a homotrimer binding the FSH hormone heterodimer composed of CGA and FSHB. Interacts with ARRB2. Interacts with APPL2; interaction is independent of follicle stimulating hormone stimulation. N-glycosylated; indirectly required for FSH-binding, possibly via a conformational change that allows high affinity binding of hormone. In terms of processing, sulfated.

It is found in the cell membrane. G protein-coupled receptor for follitropin, the follicle-stimulating hormone. Through cAMP production activates the downstream PI3K-AKT and ERK1/ERK2 signaling pathways. The protein is Follicle-stimulating hormone receptor (FSHR) of Equus asinus (Donkey).